The primary structure comprises 189 residues: uncharacterized protein (189 aa).

This is an uncharacterized protein from Aquifex aeolicus (strain VF5).